Consider the following 205-residue polypeptide: Small ribosomal subunit protein uS4 (205 aa).

An S4 RNA-binding domain is found at 103 to 173 (RRLQTIVMKK…LEKSKRAEAA (71 aa)). The segment at 174 to 205 (AREAAAEAAEAEQAAAQAAAPTPAPAAAAPKQ) is disordered. Residues 179–205 (AEAAEAEQAAAQAAAPTPAPAAAAPKQ) show a composition bias toward low complexity.

The protein belongs to the universal ribosomal protein uS4 family. In terms of assembly, part of the 30S ribosomal subunit. Contacts protein S5. The interaction surface between S4 and S5 is involved in control of translational fidelity.

Functionally, one of the primary rRNA binding proteins, it binds directly to 16S rRNA where it nucleates assembly of the body of the 30S subunit. Its function is as follows. With S5 and S12 plays an important role in translational accuracy. The chain is Small ribosomal subunit protein uS4 from Cenarchaeum symbiosum (strain A).